Reading from the N-terminus, the 154-residue chain is MSNQMNTMDITEILKYLPHRYPFLLIDRVLDFTPGESLHAIKNVTINEPFFQGHFPIQPVMPGVLILEAMAQATGLLAFKTMSDDVPPPGVLYYFAGIDNARFRRVVEPGDQIHFEVKMIKERRGIGVFYGEAKVDGEVVCSAEIMCARREINQ.

Residue histidine 54 is part of the active site.

It belongs to the thioester dehydratase family. FabZ subfamily.

It localises to the cytoplasm. The catalysed reaction is a (3R)-hydroxyacyl-[ACP] = a (2E)-enoyl-[ACP] + H2O. In terms of biological role, involved in unsaturated fatty acids biosynthesis. Catalyzes the dehydration of short chain beta-hydroxyacyl-ACPs and long chain saturated and unsaturated beta-hydroxyacyl-ACPs. The sequence is that of 3-hydroxyacyl-[acyl-carrier-protein] dehydratase FabZ from Shewanella oneidensis (strain ATCC 700550 / JCM 31522 / CIP 106686 / LMG 19005 / NCIMB 14063 / MR-1).